The sequence spans 290 residues: tRNA pseudouridine synthase A (290 aa).

Aspartate 56 serves as the catalytic Nucleophile. Tyrosine 109 is a binding site for substrate.

Belongs to the tRNA pseudouridine synthase TruA family.

It carries out the reaction uridine(38/39/40) in tRNA = pseudouridine(38/39/40) in tRNA. Formation of pseudouridine at positions 38, 39 and 40 in the anticodon stem and loop of transfer RNAs. The chain is tRNA pseudouridine synthase A from Methanobrevibacter smithii (strain ATCC 35061 / DSM 861 / OCM 144 / PS).